The chain runs to 230 residues: Carbohydrate deacetylase (230 aa).

Mg(2+) is bound by residues histidine 59 and histidine 123.

Belongs to the YdjC deacetylase family. Homodimer. Mg(2+) serves as cofactor.

Its function is as follows. Probably catalyzes the deacetylation of acetylated carbohydrates an important step in the degradation of oligosaccharides. This Oceanobacillus iheyensis (strain DSM 14371 / CIP 107618 / JCM 11309 / KCTC 3954 / HTE831) protein is Carbohydrate deacetylase.